We begin with the raw amino-acid sequence, 662 residues long: Bifunctional polymyxin resistance protein ArnA (662 aa).

Residues 1-307 (MTSKAVVFAY…ELGLVEGARL (307 aa)) form a formyltransferase ArnAFT region. Residue histidine 106 is the Proton donor; for formyltransferase activity of the active site. (6R)-10-formyltetrahydrofolate is bound by residues arginine 116 and 138–142 (VERAD). Positions 316-662 (RRTRVLILGV…EALREREAQA (347 aa)) are dehydrogenase ArnADH. Residues aspartate 349 and 370-371 (DI) each bind NAD(+). UDP-alpha-D-glucuronate is bound by residues alanine 395, tyrosine 400, and 434 to 435 (TS). Catalysis depends on glutamate 436, which acts as the Proton acceptor; for decarboxylase activity. Residues arginine 462, asparagine 493, 527–536 (RLVDGGAQKR), and tyrosine 614 contribute to the UDP-alpha-D-glucuronate site. Arginine 620 serves as the catalytic Proton donor; for decarboxylase activity.

The protein in the N-terminal section; belongs to the Fmt family. UDP-L-Ara4N formyltransferase subfamily. It in the C-terminal section; belongs to the NAD(P)-dependent epimerase/dehydratase family. UDP-glucuronic acid decarboxylase subfamily. As to quaternary structure, homohexamer, formed by a dimer of trimers.

It carries out the reaction UDP-alpha-D-glucuronate + NAD(+) = UDP-beta-L-threo-pentopyranos-4-ulose + CO2 + NADH. The enzyme catalyses UDP-4-amino-4-deoxy-beta-L-arabinose + (6R)-10-formyltetrahydrofolate = UDP-4-deoxy-4-formamido-beta-L-arabinose + (6S)-5,6,7,8-tetrahydrofolate + H(+). It functions in the pathway nucleotide-sugar biosynthesis; UDP-4-deoxy-4-formamido-beta-L-arabinose biosynthesis; UDP-4-deoxy-4-formamido-beta-L-arabinose from UDP-alpha-D-glucuronate: step 1/3. The protein operates within nucleotide-sugar biosynthesis; UDP-4-deoxy-4-formamido-beta-L-arabinose biosynthesis; UDP-4-deoxy-4-formamido-beta-L-arabinose from UDP-alpha-D-glucuronate: step 3/3. It participates in bacterial outer membrane biogenesis; lipopolysaccharide biosynthesis. Bifunctional enzyme that catalyzes the oxidative decarboxylation of UDP-glucuronic acid (UDP-GlcUA) to UDP-4-keto-arabinose (UDP-Ara4O) and the addition of a formyl group to UDP-4-amino-4-deoxy-L-arabinose (UDP-L-Ara4N) to form UDP-L-4-formamido-arabinose (UDP-L-Ara4FN). The modified arabinose is attached to lipid A and is required for resistance to polymyxin and cationic antimicrobial peptides. This chain is Bifunctional polymyxin resistance protein ArnA, found in Pseudomonas paraeruginosa (strain DSM 24068 / PA7) (Pseudomonas aeruginosa (strain PA7)).